A 233-amino-acid chain; its full sequence is RNA-free ribonuclease P (233 aa).

It belongs to the HARP family.

It carries out the reaction Endonucleolytic cleavage of RNA, removing 5'-extranucleotides from tRNA precursor.. Its function is as follows. RNA-free RNase P that catalyzes the removal of the 5'-leader sequence from pre-tRNA to produce the mature 5'-terminus. This Methanocaldococcus jannaschii (strain ATCC 43067 / DSM 2661 / JAL-1 / JCM 10045 / NBRC 100440) (Methanococcus jannaschii) protein is RNA-free ribonuclease P.